A 365-amino-acid chain; its full sequence is MAASTMSVCSSDLSYGSRVCLPGSCDSCSDSWQVDDCPESCCEPPCCAPAPCLSLVCTPVSRVSSPCCPVTCEPSPCQSGCTSSCTPSCCQQSSCQLACCASSPCQQACCVPVCCKTVCCKPVCCVSVCCGDSSCCQQSSCQSACCTSSPCQQACCVPVCCKPVCSGISSSCCQQSSCVSCVSSPCCQAVCEPSPCQSGCTSSCTPSCCQQSSCQPTCCTSSPCQQACCVPVCCVPVCCVPTCSEDSSSCCQQSSCQPACCTSSPCQHACCVPVCSGASTSCCQQSSCQPACCTASCCRSSSSVSLLCHPVCKSTCCVPVPSCGASASSCQPSCCRTASCVSLLCRPMCSRPACYSLCSGQKSSC.

Repeat copies occupy residues 41 to 45, 46 to 50, 67 to 71, 89 to 93, 99 to 103, 109 to 113, 114 to 118, 119 to 123, 124 to 128, 129 to 133, 135 to 139, 145 to 149, 155 to 159, 160 to 164, 172 to 176, 186 to 190, 208 to 212, 218 to 222, 228 to 232, 233 to 237, 238 to 242, 250 to 254, 260 to 264, 270 to 274, 282 to 286, 292 to 296, 297 to 301, 316 to 320, and 334 to 338. Positions 41 to 338 are 29 X 5 AA repeats of C-C-X(3); sequence CCEPPCCAPA…SCQPSCCRTA (298 aa).

The protein belongs to the KRTAP type 10 family. As to quaternary structure, interacts with hair keratins. In terms of tissue distribution, restricted to a narrow region of the hair fiber cuticle, lying approximately 20 cell layers above the apex of the dermal papilla of the hair root; not detected in any other tissues.

In the hair cortex, hair keratin intermediate filaments are embedded in an interfilamentous matrix, consisting of hair keratin-associated proteins (KRTAP), which are essential for the formation of a rigid and resistant hair shaft through their extensive disulfide bond cross-linking with abundant cysteine residues of hair keratins. The matrix proteins include the high-sulfur and high-glycine-tyrosine keratins. This chain is Keratin-associated protein 10-6 (KRTAP10-6), found in Homo sapiens (Human).